A 168-amino-acid polypeptide reads, in one-letter code: HTH-type transcriptional regulator IscR (168 aa).

In terms of domain architecture, HTH rrf2-type spans 2–131 (KLTSKGRYAV…DGISLGELMV (130 aa)). A DNA-binding region (H-T-H motif) is located at residues 28–51 (LADISERQGISLSYLEQLFSKLRK). [2Fe-2S] cluster contacts are provided by C92, C98, and C104.

[2Fe-2S] cluster serves as cofactor.

In terms of biological role, regulates the transcription of several operons and genes involved in the biogenesis of Fe-S clusters and Fe-S-containing proteins. The polypeptide is HTH-type transcriptional regulator IscR (Aliivibrio salmonicida (strain LFI1238) (Vibrio salmonicida (strain LFI1238))).